Here is a 464-residue protein sequence, read N- to C-terminus: PH domain-containing rcdII (464 aa).

Positions 8-210 form a coiled coil; it reads KSSKEIIEDL…NTKLMSNLEI (203 aa). Disordered regions lie at residues 215 to 290 and 317 to 347; these read NFNN…NSSG and CNNN…SNSN. 3 stretches are compositionally biased toward low complexity: residues 234–288, 317–328, and 338–347; these read STTT…SSNS, CNNNNNNNNGNS, and RSRSSSSNSN. The PH domain maps to 353–461; the sequence is KIVKEGWLKR…WKDTISSLMP (109 aa).

The chain is PH domain-containing rcdII (rcdII) from Dictyostelium discoideum (Social amoeba).